The sequence spans 537 residues: Atrial natriuretic peptide receptor 3 (537 aa).

The signal sequence occupies residues 1–20 (MPSLLVLTFSACVLLGWALL). The propeptide occupies 21–41 (ADCTGGGGSGGAGPGRGRRER). The Extracellular portion of the chain corresponds to 42–477 (EALPPQKIEV…PCKASGGLEE (436 aa)). The N-linked (GlcNAc...) asparagine glycan is linked to asparagine 82. Intrachain disulfides connect cysteine 104-cysteine 132 and cysteine 209-cysteine 257. Residues asparagine 289 and asparagine 390 are each glycosylated (N-linked (GlcNAc...) asparagine). The helical transmembrane segment at 478–500 (SAVTGIVVGALLGAGLLMAFYFF) threads the bilayer. At 501–537 (RKKYRITIERRNQQEESNVGKHRELREDSIRSHFSVA) the chain is on the cytoplasmic side.

It belongs to the ANF receptor family. In terms of assembly, homodimer; disulfide-linked. Interacts with OSTN.

The protein resides in the cell membrane. Its function is as follows. Receptor for the natriuretic peptide hormones, binding with similar affinities atrial natriuretic peptide NPPA/ANP, brain natriuretic peptide NPPB/BNP, and C-type natriuretic peptide NPPC/CNP. May function as a clearance receptor for NPPA, NPPB and NPPC, regulating their local concentrations and effects. Acts as a regulator of osteoblast differentiation and bone growth by binding to its ligand osteocrin, thereby preventing binding between NPR3/NPR-C and natriuretic peptides, leading to increase cGMP production. The chain is Atrial natriuretic peptide receptor 3 (NPR3) from Bos taurus (Bovine).